An 87-amino-acid chain; its full sequence is Olfactory receptor-like protein HbT2 (87 aa).

Residues 1-8 are Cytoplasmic-facing; it reads KLWRMTGT. A helical transmembrane segment spans residues 9-29; sequence WLGGFCHSIIQIPVIIQLPFC. The Extracellular segment spans residues 30–55; sequence GPNVIDHYFRDLQPLFKLACTDTFME. The helical transmembrane segment at 56–76 threads the bilayer; it reads GVIVLAFSGLFSVFSFLILVS. The Cytoplasmic segment spans residues 77 to 87; it reads SYIVILVNLRN.

It belongs to the G-protein coupled receptor 1 family.

It is found in the cell membrane. Its function is as follows. Odorant receptor. In Apis mellifera ligustica (Common honeybee), this protein is Olfactory receptor-like protein HbT2.